The primary structure comprises 136 residues: Small ribosomal subunit protein uS19 (136 aa).

Belongs to the universal ribosomal protein uS19 family.

Protein S19 forms a complex with S13 that binds strongly to the 16S ribosomal RNA. The chain is Small ribosomal subunit protein uS19 from Methanocorpusculum labreanum (strain ATCC 43576 / DSM 4855 / Z).